Here is a 257-residue protein sequence, read N- to C-terminus: Ditrans,polycis-undecaprenyl-diphosphate synthase ((2E,6E)-farnesyl-diphosphate specific) (257 aa).

Residue aspartate 24 is part of the active site. A Mg(2+)-binding site is contributed by aspartate 24. Residues glycine 25–arginine 28, tryptophan 29, arginine 37, histidine 41, and serine 69–glutamate 71 each bind substrate. Asparagine 72 acts as the Proton acceptor in catalysis. Substrate contacts are provided by residues tryptophan 73, arginine 75, arginine 192, and arginine 198 to serine 200. Glutamate 211 lines the Mg(2+) pocket.

It belongs to the UPP synthase family. As to quaternary structure, homodimer. Requires Mg(2+) as cofactor.

It carries out the reaction 8 isopentenyl diphosphate + (2E,6E)-farnesyl diphosphate = di-trans,octa-cis-undecaprenyl diphosphate + 8 diphosphate. Functionally, catalyzes the sequential condensation of isopentenyl diphosphate (IPP) with (2E,6E)-farnesyl diphosphate (E,E-FPP) to yield (2Z,6Z,10Z,14Z,18Z,22Z,26Z,30Z,34E,38E)-undecaprenyl diphosphate (di-trans,octa-cis-UPP). UPP is the precursor of glycosyl carrier lipid in the biosynthesis of bacterial cell wall polysaccharide components such as peptidoglycan and lipopolysaccharide. This is Ditrans,polycis-undecaprenyl-diphosphate synthase ((2E,6E)-farnesyl-diphosphate specific) from Aliivibrio fischeri (strain ATCC 700601 / ES114) (Vibrio fischeri).